The sequence spans 180 residues: Cell division protein SepF (180 aa).

Positions 14-81 are disordered; it reads NSEDDEEFDN…SKITPISKSS (68 aa). Acidic residues predominate over residues 15–35; sequence SEDDEEFDNEDYYLDDEEEEE. The span at 57–68 shows a compositional bias: basic and acidic residues; the sequence is TRRDTTPKEKPV. Positions 69–79 are enriched in low complexity; the sequence is KTTSKITPISK.

It belongs to the SepF family. In terms of assembly, homodimer. Interacts with FtsZ.

It localises to the cytoplasm. Cell division protein that is part of the divisome complex and is recruited early to the Z-ring. Probably stimulates Z-ring formation, perhaps through the cross-linking of FtsZ protofilaments. Its function overlaps with FtsA. The polypeptide is Cell division protein SepF (Agathobacter rectalis (strain ATCC 33656 / DSM 3377 / JCM 17463 / KCTC 5835 / VPI 0990) (Eubacterium rectale)).